The primary structure comprises 839 residues: Probable beta-glucosidase I (839 aa).

Residue N197 is glycosylated (N-linked (GlcNAc...) asparagine). Residue D225 is part of the active site. The 161-residue stretch at 396-556 folds into the PA14 domain; it reads DGKTGFKFRV…TQEELISKAV (161 aa). The N-linked (GlcNAc...) asparagine glycan is linked to N494.

This sequence belongs to the glycosyl hydrolase 3 family.

The protein localises to the secreted. It carries out the reaction Hydrolysis of terminal, non-reducing beta-D-glucosyl residues with release of beta-D-glucose.. Its pathway is glycan metabolism; cellulose degradation. Its function is as follows. Beta-glucosidases are one of a number of cellulolytic enzymes, and catalyze the last step releasing glucose from the inhibitory cellobiose. This chain is Probable beta-glucosidase I (bglI), found in Emericella nidulans (strain FGSC A4 / ATCC 38163 / CBS 112.46 / NRRL 194 / M139) (Aspergillus nidulans).